Consider the following 677-residue polypeptide: Secretogranin-1 (677 aa).

A signal peptide spans 1–20; it reads MQPAMLLGLLGAAALAAVSS. Cys-36 and Cys-57 are joined by a disulfide. Disordered regions lie at residues 63 to 505 and 531 to 558; these read KSGK…RQYE and NSDF…VTLT. Positions 64-90 are enriched in basic and acidic residues; the sequence is SGKEVKGEEKGENQNSKFEVRLLRDPA. Phosphoserine is present on residues Ser-93, Ser-99, and Ser-100. An O-linked (Xyl...) (chondroitin sulfate) serine glycan is attached at Ser-93. O-linked (GalNAc...) threonine glycosylation is present at Thr-115. Positions 118-133 are enriched in basic and acidic residues; it reads GNEKWTEGGGHSREGV. Residues Ser-129, Ser-147, Ser-190, and Ser-220 each carry the phosphoserine modification. Basic and acidic residues-rich tracts occupy residues 148–192 and 200–249; these read KEAK…DSGE and KRSE…KPQE. Residue Ser-237 is glycosylated (O-linked (Xyl...) (chondroitin sulfate) serine). The span at 251–280 shows a compositional bias: acidic residues; it reads TDQDQSQEESQEGEEGEEGEEGEEGEEDSA. Residues Ser-256, Ser-260, Ser-300, Ser-301, Ser-318, and Ser-342 each carry the phosphoserine modification. The span at 306 to 322 shows a compositional bias: basic and acidic residues; that stretch reads PLSEERRPSPKESKEAD. The residue at position 348 (Tyr-348) is a Sulfotyrosine. Composition is skewed to basic and acidic residues over residues 363–409 and 421–455; these read RGSE…ERSY and GREP…DTAK. 3 positions are modified to phosphoserine: Ser-365, Ser-375, and Ser-378. Tyr-472 is subject to Sulfotyrosine. The segment covering 491–504 has biased composition (basic and acidic residues); that stretch reads EESREEVRFPDRQY. Ser-493, Ser-532, and Ser-543 each carry phosphoserine. Sulfotyrosine occurs at positions 566 and 624. The segment at 622 to 646 is disordered; sequence DFYDSEEQMGPHQEANDEKARADQR. Ser-626 carries the post-translational modification Phosphoserine. Residues 635-646 are compositionally biased toward basic and acidic residues; that stretch reads EANDEKARADQR.

Belongs to the chromogranin/secretogranin protein family. Interacts with ITPR1 in the secretory granules.

Its subcellular location is the secreted. In terms of biological role, secretogranin-1 is a neuroendocrine secretory granule protein, which may be the precursor for other biologically active peptides. The protein is Secretogranin-1 (Chgb) of Mus musculus (Mouse).